The following is a 595-amino-acid chain: D-xylonate dehydratase (595 aa).

Cysteine 64 provides a ligand contact to [2Fe-2S] cluster. Mg(2+) is bound at residue glutamate 96. Residue cysteine 132 coordinates [2Fe-2S] cluster. Aspartate 133 serves as a coordination point for Mg(2+). [2Fe-2S] cluster is bound at residue cysteine 205. Glutamate 467 is a Mg(2+) binding site.

Belongs to the IlvD/Edd family. In terms of assembly, homotetramer. It depends on [2Fe-2S] cluster as a cofactor. Requires Mg(2+) as cofactor.

The catalysed reaction is D-xylonate = 2-dehydro-3-deoxy-D-arabinonate + H2O. It catalyses the reaction D-gluconate = 2-dehydro-3-deoxy-D-gluconate + H2O. Its pathway is carbohydrate metabolism; D-xylose degradation. In terms of biological role, catalyzes the dehydration of D-xylonate to 2-dehydro-3-deoxy-D-arabinonate during D-xylose degradation. Can also dehydrate D-gluconate, with similar catalytic efficiency. Has weak activity with D-galactonate, D-fuconate and L-arabinonate. The polypeptide is D-xylonate dehydratase (Caulobacter vibrioides (strain ATCC 19089 / CIP 103742 / CB 15) (Caulobacter crescentus)).